The following is a 339-amino-acid chain: Olfactory receptor 7E24 (339 aa).

Residues 1–43 are Extracellular-facing; it reads MSYFPILFFFFLKRCPSYTEPQNLTGVSEFLLLGLSEDPELQP. N-linked (GlcNAc...) asparagine glycosylation occurs at asparagine 23. Residues 44 to 64 form a helical membrane-spanning segment; it reads VLAGLFLSMYLVTVLGNLLII. Residues 65–72 are Cytoplasmic-facing; the sequence is LAVSSDSH. The helical transmembrane segment at 73–93 threads the bilayer; the sequence is LHTPMYFFLSNLSLADIGFTS. Over 94 to 117 the chain is Extracellular; that stretch reads TTVPKMIVDMQTHSRVISYEGCLT. An intrachain disulfide couples cysteine 115 to cysteine 207. A helical transmembrane segment spans residues 118–138; sequence QMSFFVLFACMDDMLLSVMAY. Topologically, residues 139 to 157 are cytoplasmic; it reads DRFVAICHPLHYRIIMNPR. The chain crosses the membrane as a helical span at residues 158-178; that stretch reads LCGFLILLSFFISLLDSQLHN. At 179 to 215 the chain is on the extracellular side; the sequence is LIMLQLTCFKDVDISNFFCDPSQLLHLRCSDTFINEM. A helical membrane pass occupies residues 216–235; sequence VIYFMGAIFGCLPISGILFS. The Cytoplasmic portion of the chain corresponds to 236–255; that stretch reads YYKIVSPILRVPTSDGKYKA. The chain crosses the membrane as a helical span at residues 256–276; sequence FSTCGSHLAVVCLFYGTGLVG. Over 277–289 the chain is Extracellular; the sequence is YLSSAVLPSPRKS. The helical transmembrane segment at 290–310 threads the bilayer; sequence MVASVMYTVVTPMLNPFIYSL. At 311 to 339 the chain is on the cytoplasmic side; it reads RNKDIQSALCRLHGRIIKSHHLHPFCYMG.

It belongs to the G-protein coupled receptor 1 family.

It localises to the cell membrane. Odorant receptor. The protein is Olfactory receptor 7E24 (OR7E24) of Homo sapiens (Human).